The primary structure comprises 346 residues: Olfactory receptor 8G5 (346 aa).

The Extracellular portion of the chain corresponds to 1–60 (MIIYKQGITFLQKENNNTIHLNTMFFLSPAETHQRMAAENHSFVTKFILVGLTEKSELQL). N-linked (GlcNAc...) asparagine glycans are attached at residues N16 and N40. The chain crosses the membrane as a helical span at residues 61–81 (PLFLVFLGIYVVTVLGNLGMI). Topologically, residues 82 to 89 (TLIGLSSH) are cytoplasmic. Residues 90–110 (LHTPMYCFLSSLSFIDFCHST) form a helical membrane-spanning segment. Residues 111–134 (VITPKMLVNFVTEKNIISYPECMT) lie on the Extracellular side of the membrane. A disulfide bridge connects residues C132 and C214. The helical transmembrane segment at 135–155 (QLYFFLVFAIAECHMLAAMAY) threads the bilayer. The Cytoplasmic segment spans residues 156 to 174 (DGYVAICSPLLYSIIISNK). Residues 175–195 (ACFSLILVVYVIGLICASAHI) traverse the membrane as a helical segment. The Extracellular segment spans residues 196–232 (GCMFRVQFCKFDVINHYFCDLISILKLSCSSTYINEL). A helical transmembrane segment spans residues 233–252 (LILIFSGINILVPSLTILSS). Over 253–272 (YIFIIASILRIRYTEGRSKA) the chain is Cytoplasmic. A helical transmembrane segment spans residues 273 to 293 (FSTCSSHISAVSVFFGSAAFM). The Extracellular segment spans residues 294–306 (YLQPSSVSSMDQG). A helical membrane pass occupies residues 307–327 (KVSSVFYTIVVPMLNPLIYSL). Topologically, residues 328–346 (RNKDVHVALKKTLGKRTFL) are cytoplasmic.

It belongs to the G-protein coupled receptor 1 family.

It localises to the cell membrane. Its function is as follows. Odorant receptor. The protein is Olfactory receptor 8G5 (OR8G5) of Homo sapiens (Human).